A 357-amino-acid polypeptide reads, in one-letter code: Cobalt-precorrin-5B C(1)-methyltransferase (357 aa).

Belongs to the CbiD family.

The catalysed reaction is Co-precorrin-5B + S-adenosyl-L-methionine = Co-precorrin-6A + S-adenosyl-L-homocysteine. It functions in the pathway cofactor biosynthesis; adenosylcobalamin biosynthesis; cob(II)yrinate a,c-diamide from sirohydrochlorin (anaerobic route): step 6/10. Its function is as follows. Catalyzes the methylation of C-1 in cobalt-precorrin-5B to form cobalt-precorrin-6A. This chain is Cobalt-precorrin-5B C(1)-methyltransferase, found in Paramagnetospirillum magneticum (strain ATCC 700264 / AMB-1) (Magnetospirillum magneticum).